The sequence spans 285 residues: Phosphatidylserine decarboxylase proenzyme (285 aa).

Residues D89, H146, and S252 each act as charge relay system; for autoendoproteolytic cleavage activity in the active site. The Schiff-base intermediate with substrate; via pyruvic acid; for decarboxylase activity role is filled by S252. The residue at position 252 (S252) is a Pyruvic acid (Ser); by autocatalysis.

The protein belongs to the phosphatidylserine decarboxylase family. PSD-B subfamily. Prokaryotic type I sub-subfamily. Heterodimer of a large membrane-associated beta subunit and a small pyruvoyl-containing alpha subunit. Pyruvate is required as a cofactor. Post-translationally, is synthesized initially as an inactive proenzyme. Formation of the active enzyme involves a self-maturation process in which the active site pyruvoyl group is generated from an internal serine residue via an autocatalytic post-translational modification. Two non-identical subunits are generated from the proenzyme in this reaction, and the pyruvate is formed at the N-terminus of the alpha chain, which is derived from the carboxyl end of the proenzyme. The autoendoproteolytic cleavage occurs by a canonical serine protease mechanism, in which the side chain hydroxyl group of the serine supplies its oxygen atom to form the C-terminus of the beta chain, while the remainder of the serine residue undergoes an oxidative deamination to produce ammonia and the pyruvoyl prosthetic group on the alpha chain. During this reaction, the Ser that is part of the protease active site of the proenzyme becomes the pyruvoyl prosthetic group, which constitutes an essential element of the active site of the mature decarboxylase.

The protein localises to the cell membrane. The enzyme catalyses a 1,2-diacyl-sn-glycero-3-phospho-L-serine + H(+) = a 1,2-diacyl-sn-glycero-3-phosphoethanolamine + CO2. It participates in phospholipid metabolism; phosphatidylethanolamine biosynthesis; phosphatidylethanolamine from CDP-diacylglycerol: step 2/2. Its function is as follows. Catalyzes the formation of phosphatidylethanolamine (PtdEtn) from phosphatidylserine (PtdSer). The protein is Phosphatidylserine decarboxylase proenzyme of Vibrio cholerae serotype O1 (strain ATCC 39541 / Classical Ogawa 395 / O395).